The following is a 399-amino-acid chain: uncharacterized protein (399 aa).

5 helical membrane-spanning segments follow: residues 26 to 46, 266 to 286, 301 to 321, 324 to 344, and 358 to 378; these read LLTI…ISLG, VITI…AVGI, IGIL…FVVE, FLGL…AEVI, and AWIS…VGVI.

This sequence belongs to the ABC-4 integral membrane protein family.

Its subcellular location is the cell membrane. This is an uncharacterized protein from Methanocaldococcus jannaschii (strain ATCC 43067 / DSM 2661 / JAL-1 / JCM 10045 / NBRC 100440) (Methanococcus jannaschii).